The chain runs to 299 residues: Formin-like protein 12 (299 aa).

One can recognise an FH2 domain in the interval 1–295 (MASNCEKMLS…LEKRKMNIKQ (295 aa)).

The protein belongs to the formin-like family. Class-II subfamily.

This is Formin-like protein 12 (FH12) from Arabidopsis thaliana (Mouse-ear cress).